The primary structure comprises 510 residues: Probable lysine--tRNA ligase, cytoplasmic (510 aa).

Belongs to the class-II aminoacyl-tRNA synthetase family. Homodimer.

The protein resides in the cytoplasm. It carries out the reaction tRNA(Lys) + L-lysine + ATP = L-lysyl-tRNA(Lys) + AMP + diphosphate. This Encephalitozoon cuniculi (strain GB-M1) (Microsporidian parasite) protein is Probable lysine--tRNA ligase, cytoplasmic.